The primary structure comprises 95 residues: MSFRPLHDRVVVKRLEGEEKTKGGIIIPDTAKEKPQEGEIIAVGPGGRDDSGKLTPLDVKAGDKVLFGKWSGTEVKIDGQDLLIMKESDILGVVA.

Belongs to the GroES chaperonin family. As to quaternary structure, heptamer of 7 subunits arranged in a ring. Interacts with the chaperonin GroEL.

The protein resides in the cytoplasm. Together with the chaperonin GroEL, plays an essential role in assisting protein folding. The GroEL-GroES system forms a nano-cage that allows encapsulation of the non-native substrate proteins and provides a physical environment optimized to promote and accelerate protein folding. GroES binds to the apical surface of the GroEL ring, thereby capping the opening of the GroEL channel. This is Co-chaperonin GroES from Methylocella silvestris (strain DSM 15510 / CIP 108128 / LMG 27833 / NCIMB 13906 / BL2).